The sequence spans 634 residues: Kinesin-like protein KIF22 (634 aa).

Positions 19–345 (RVRVAVRLRP…LNFAAKSKQI (327 aa)) constitute a Kinesin motor domain. 103 to 110 (GPTGAGKT) serves as a coordination point for ATP. Positions 357-406 (APTIAPGKRTREEQEAGGSGEPQNKRSKEGKKAEHSPSPPLHPQSSPDSS) are disordered. Residues 379–391 (QNKRSKEGKKAEH) show a composition bias toward basic and acidic residues. Positions 421–471 (SAERERLNLLKTVAQSRKEIQMLKEKQKELEDKANMFNKQKETTEKESKDA) form a coiled coil.

The protein belongs to the TRAFAC class myosin-kinesin ATPase superfamily. Kinesin family. Ubiquitinated, leading to its subsequent proteasomal degradation.

The protein resides in the nucleus. The protein localises to the cytoplasm. It localises to the cytoskeleton. Its function is as follows. Kinesin family member that is involved in spindle formation and the movements of chromosomes during mitosis and meiosis. Binds to microtubules and to DNA. The chain is Kinesin-like protein KIF22 (kif22) from Danio rerio (Zebrafish).